A 120-amino-acid chain; its full sequence is UPF0231 protein YE0706 (120 aa).

Belongs to the UPF0231 family.

This Yersinia enterocolitica serotype O:8 / biotype 1B (strain NCTC 13174 / 8081) protein is UPF0231 protein YE0706.